A 522-amino-acid chain; its full sequence is 2-isopropylmalate synthase (522 aa).

The 263-residue stretch at 5 to 267 (VIIFDTTLRD…YTNINAREIH (263 aa)) folds into the Pyruvate carboxyltransferase domain. Aspartate 14, histidine 202, histidine 204, and asparagine 238 together coordinate Mn(2+). The segment at 392–522 (VMEQLVVQSD…MQQTRELGGV (131 aa)) is regulatory domain.

Belongs to the alpha-IPM synthase/homocitrate synthase family. LeuA type 1 subfamily. In terms of assembly, homodimer. Mn(2+) serves as cofactor.

The protein resides in the cytoplasm. The catalysed reaction is 3-methyl-2-oxobutanoate + acetyl-CoA + H2O = (2S)-2-isopropylmalate + CoA + H(+). Its pathway is amino-acid biosynthesis; L-leucine biosynthesis; L-leucine from 3-methyl-2-oxobutanoate: step 1/4. In terms of biological role, catalyzes the condensation of the acetyl group of acetyl-CoA with 3-methyl-2-oxobutanoate (2-ketoisovalerate) to form 3-carboxy-3-hydroxy-4-methylpentanoate (2-isopropylmalate). This chain is 2-isopropylmalate synthase, found in Shewanella amazonensis (strain ATCC BAA-1098 / SB2B).